Consider the following 331-residue polypeptide: UDP-GalNAc:beta-1,3-N-acetylgalactosaminyltransferase 1 (331 aa).

The Cytoplasmic segment spans residues 1–20 (MASALWTVLPSRMSLRSLKW). A helical; Signal-anchor for type II membrane protein membrane pass occupies residues 21 to 43 (SLLLLSLLSFFVMWYLSLPHYNV). At 44–331 (IERVNWMYFY…VMLRNTTCHY (288 aa)) the chain is on the lumenal side. Asn72, Asn154, Asn198, Asn212, and Asn326 each carry an N-linked (GlcNAc...) asparagine glycan.

Belongs to the glycosyltransferase 31 family. The cofactor is Mg(2+). In terms of tissue distribution, higher expression in heart and brain, and to a lesser extent in lung, placenta, kidney and testis. Lower expression in liver, spleen and stomach. No expression in skeletal muscle.

The protein resides in the golgi apparatus membrane. The enzyme catalyses a globoside Gb3Cer (d18:1(4E)) + UDP-N-acetyl-alpha-D-galactosamine = a globoside Gb4Cer (d18:1(4E)) + UDP + H(+). It participates in protein modification; protein glycosylation. Transfers N-acetylgalactosamine onto globotriaosylceramide. Plays a critical role in preimplantation stage embryonic development. The polypeptide is UDP-GalNAc:beta-1,3-N-acetylgalactosaminyltransferase 1 (Homo sapiens (Human)).